We begin with the raw amino-acid sequence, 215 residues long: NADH-quinone oxidoreductase subunit C (215 aa).

The protein belongs to the complex I 30 kDa subunit family. As to quaternary structure, NDH-1 is composed of 14 different subunits. Subunits NuoB, C, D, E, F, and G constitute the peripheral sector of the complex.

The protein localises to the cell inner membrane. It carries out the reaction a quinone + NADH + 5 H(+)(in) = a quinol + NAD(+) + 4 H(+)(out). NDH-1 shuttles electrons from NADH, via FMN and iron-sulfur (Fe-S) centers, to quinones in the respiratory chain. The immediate electron acceptor for the enzyme in this species is believed to be ubiquinone. Couples the redox reaction to proton translocation (for every two electrons transferred, four hydrogen ions are translocated across the cytoplasmic membrane), and thus conserves the redox energy in a proton gradient. The sequence is that of NADH-quinone oxidoreductase subunit C from Dinoroseobacter shibae (strain DSM 16493 / NCIMB 14021 / DFL 12).